A 118-amino-acid polypeptide reads, in one-letter code: MKLRANRVGEQMKKELGDIISRKIKDPRVGFVTVTDVQVSGDLQIATVYISVLGDEEQKESTLKGLAKAKGFIRSEIGQRIRLRKTPEISFEFDESIGYGHRIDTLLHEINKEGKREE.

This sequence belongs to the RbfA family. In terms of assembly, monomer. Binds 30S ribosomal subunits, but not 50S ribosomal subunits or 70S ribosomes.

It is found in the cytoplasm. Functionally, one of several proteins that assist in the late maturation steps of the functional core of the 30S ribosomal subunit. Associates with free 30S ribosomal subunits (but not with 30S subunits that are part of 70S ribosomes or polysomes). Required for efficient processing of 16S rRNA. May interact with the 5'-terminal helix region of 16S rRNA. The sequence is that of Ribosome-binding factor A from Bacillus cereus (strain ATCC 10987 / NRS 248).